We begin with the raw amino-acid sequence, 1214 residues long: Neuronal cell adhesion molecule (1214 aa).

The first 29 residues, 1 to 29 (MQLKTMPKKKPLSAGRAPLFLFLCQMISA), serve as a signal peptide directing secretion. Topologically, residues 30-1077 (LDVPLDPKLL…ASRQVDIATQ (1048 aa)) are extracellular. 2 consecutive Ig-like C2-type domains span residues 46–134 (PTIT…AAVS) and 141–235 (PSRS…QPIS). 2 cysteine pairs are disulfide-bonded: cysteine 68–cysteine 123 and cysteine 167–cysteine 218. Asparagine 83 carries N-linked (GlcNAc...) asparagine glycosylation. N-linked (GlcNAc...) asparagine glycosylation is found at asparagine 223, asparagine 245, asparagine 251, asparagine 276, asparagine 314, and asparagine 377. Ig-like C2-type domains are found at residues 267–356 (PPTF…ISVT), 361–448 (PYWI…AFVN), 454–541 (PRIL…VHLE), and 545–626 (PTRF…DSVS). Residues cysteine 292 and cysteine 340 are joined by a disulfide bond. A disulfide bridge connects residues cysteine 382 and cysteine 432. Asparagine 433 and asparagine 507 each carry an N-linked (GlcNAc...) asparagine glycan. 2 disulfides stabilise this stretch: cysteine 476-cysteine 525 and cysteine 567-cysteine 616. N-linked (GlcNAc...) asparagine glycosylation is found at asparagine 619, asparagine 716, asparagine 802, asparagine 858, asparagine 993, asparagine 1009, and asparagine 1019. Fibronectin type-III domains follow at residues 649-744 (PPFD…TKAA), 746-843 (PDQN…SGED), 848-950 (APGN…TPEG), and 954-1051 (APSS…VDEG). The chain crosses the membrane as a helical span at residues 1078-1100 (GWFIGLMCAVALLILILLIVCFI). Residues 1101 to 1214 (RRNKGGKYPV…SPVNAMNSFV (114 aa)) lie on the Cytoplasmic side of the membrane. A compositionally biased stretch (basic and acidic residues) spans 1109 to 1129 (PVKEKEDAHADPEIQPMKEDD). Residues 1109–1214 (PVKEKEDAHA…SPVNAMNSFV (106 aa)) are disordered. Threonine 1131 carries the phosphothreonine modification. A Phosphotyrosine modification is found at tyrosine 1135. Serine 1136 bears the Phosphoserine mark. A compositionally biased stretch (basic and acidic residues) spans 1151 to 1160 (PSDRTVKKED). A phosphoserine mark is found at serine 1161, serine 1164, serine 1181, serine 1200, serine 1201, and serine 1205. Positions 1198 to 1214 (NESSEAPSPVNAMNSFV) are enriched in polar residues.

This sequence belongs to the immunoglobulin superfamily. L1/neurofascin/NgCAM family. As to quaternary structure, constituent of a NFASC/NRCAM/ankyrin-G complex. Detected in a complex with CNTN1 and PTPRB. Interacts with MYOC. Interacts with GLDN. In terms of tissue distribution, detected in cerebellum Purkinje cells. Detected on nodes of Ranvier and unmyelinated axons in sciatic nerve (at protein level).

The protein resides in the cell membrane. It localises to the cell projection. Its subcellular location is the axon. The protein localises to the secreted. Functionally, cell adhesion protein that is required for normal responses to cell-cell contacts in brain and in the peripheral nervous system. Plays a role in neurite outgrowth in response to contactin binding. Plays a role in mediating cell-cell contacts between Schwann cells and axons. Plays a role in the formation and maintenance of the nodes of Ranvier on myelinated axons. Nodes of Ranvier contain clustered sodium channels that are crucial for the saltatory propagation of action potentials along myelinated axons. During development, nodes of Ranvier are formed by the fusion of two heminodes. Required for normal clustering of sodium channels at heminodes; not required for the formation of mature nodes with normal sodium channel clusters. Required, together with GLDN, for maintaining NFASC and sodium channel clusters at mature nodes of Ranvier. This is Neuronal cell adhesion molecule (Nrcam) from Rattus norvegicus (Rat).